Consider the following 252-residue polypeptide: Ribosomal RNA small subunit methyltransferase A (252 aa).

The S-adenosyl-L-methionine site is built by Asn-10, Leu-12, Gly-36, Glu-57, Asp-81, and Asn-98.

The protein belongs to the class I-like SAM-binding methyltransferase superfamily. rRNA adenine N(6)-methyltransferase family. RsmA subfamily.

The protein localises to the cytoplasm. The catalysed reaction is adenosine(1518)/adenosine(1519) in 16S rRNA + 4 S-adenosyl-L-methionine = N(6)-dimethyladenosine(1518)/N(6)-dimethyladenosine(1519) in 16S rRNA + 4 S-adenosyl-L-homocysteine + 4 H(+). In terms of biological role, specifically dimethylates two adjacent adenosines (A1518 and A1519) in the loop of a conserved hairpin near the 3'-end of 16S rRNA in the 30S particle. May play a critical role in biogenesis of 30S subunits. This chain is Ribosomal RNA small subunit methyltransferase A, found in Mycoplasmopsis pulmonis (strain UAB CTIP) (Mycoplasma pulmonis).